The following is a 528-amino-acid chain: NAD(P)H-quinone oxidoreductase chain 4 1 (528 aa).

Transmembrane regions (helical) follow at residues 7-27 (FPWLSVLVLLPLLAAFGIPLI), 32-52 (WVRWYALAVGAFDLGLMAYVF), 86-106 (LSLPLVLLSGLITTLSIVAAW), 114-134 (LFFFLLLLMYGAQVGVFLAQD), 136-156 (LLFFLMWEIELVPVYLLISIW), 168-188 (FILYTAAASIFILVGSLAMAF), 208-228 (ALELLAYAALLIAFGVKLPIF), 242-262 (SAPISMILAGVLLKMGGYGLI), 276-296 (FAPVLAVLGVVNIIYGALAAF), 310-330 (IAHMGFVLIGISAFTELGING), 331-351 (AVLQMISHGLIAAVLFFLTGI), 375-395 (FALFTAGSLASLALPGMSGFV), 417-437 (GIALLAAVGIILTPIYLLSML), and 463-483 (MAVALCLLLPILGIGFYPRLA).

This sequence belongs to the complex I subunit 4 family.

The protein localises to the cellular thylakoid membrane. It carries out the reaction a plastoquinone + NADH + (n+1) H(+)(in) = a plastoquinol + NAD(+) + n H(+)(out). It catalyses the reaction a plastoquinone + NADPH + (n+1) H(+)(in) = a plastoquinol + NADP(+) + n H(+)(out). NDH-1 shuttles electrons from NAD(P)H, via FMN and iron-sulfur (Fe-S) centers, to quinones in the respiratory chain. The immediate electron acceptor for the enzyme in this species is believed to be plastoquinone. Couples the redox reaction to proton translocation (for every two electrons transferred, four hydrogen ions are translocated across the cytoplasmic membrane), and thus conserves the redox energy in a proton gradient. This chain is NAD(P)H-quinone oxidoreductase chain 4 1, found in Synechococcus sp. (strain JA-2-3B'a(2-13)) (Cyanobacteria bacterium Yellowstone B-Prime).